We begin with the raw amino-acid sequence, 356 residues long: Tyrosine recombinase XerS (356 aa).

The region spanning 16-121 (IMPWYVLDYY…ALSSLYKYLT (106 aa)) is the Core-binding (CB) domain. In terms of domain architecture, Tyr recombinase spans 169–354 (AFLDYVDKEY…VNDEQKTALD (186 aa)). Active-site residues include arginine 210, lysine 234, histidine 306, arginine 309, and histidine 332. Tyrosine 341 serves as the catalytic O-(3'-phospho-DNA)-tyrosine intermediate.

Belongs to the 'phage' integrase family. XerS subfamily.

It localises to the cytoplasm. With respect to regulation, ftsK is required for recombination. Its function is as follows. Site-specific tyrosine recombinase, which acts by catalyzing the cutting and rejoining of the recombining DNA molecules. Essential to convert dimers of the bacterial chromosome into monomers to permit their segregation at cell division. The sequence is that of Tyrosine recombinase XerS from Streptococcus pyogenes serotype M12 (strain MGAS9429).